An 874-amino-acid chain; its full sequence is Lon protease (874 aa).

The Lon N-terminal domain occupies Leu-18–Leu-261. Disordered regions lie at residues Val-47–Ser-68, Gly-120–Gly-144, and Leu-298–Asp-318. Residues Pro-124–Gly-142 show a composition bias toward low complexity. Gly-430–Thr-437 contacts ATP. The region spanning Thr-667–Pro-851 is the Lon proteolytic domain. Active-site residues include Ser-757 and Lys-800. The tract at residues Phe-853–Ala-874 is disordered.

This sequence belongs to the peptidase S16 family. Homohexamer. Organized in a ring with a central cavity.

It localises to the cytoplasm. The catalysed reaction is Hydrolysis of proteins in presence of ATP.. Its function is as follows. ATP-dependent serine protease that mediates the selective degradation of mutant and abnormal proteins as well as certain short-lived regulatory proteins. Required for cellular homeostasis and for survival from DNA damage and developmental changes induced by stress. Degrades polypeptides processively to yield small peptide fragments that are 5 to 10 amino acids long. Binds to DNA in a double-stranded, site-specific manner. This Frankia alni (strain DSM 45986 / CECT 9034 / ACN14a) protein is Lon protease.